The sequence spans 312 residues: 2,3-dihydroxyphenylpropionate/2,3-dihydroxicinnamic acid 1,2-dioxygenase 1 (312 aa).

H115 (proton donor) is an active-site residue. H179 acts as the Proton acceptor in catalysis.

Belongs to the LigB/MhpB extradiol dioxygenase family. As to quaternary structure, homotetramer. It depends on Fe(2+) as a cofactor.

It carries out the reaction 3-(2,3-dihydroxyphenyl)propanoate + O2 = (2Z,4E)-2-hydroxy-6-oxonona-2,4-dienedioate + H(+). The enzyme catalyses (2E)-3-(2,3-dihydroxyphenyl)prop-2-enoate + O2 = (2Z,4E,7E)-2-hydroxy-6-oxonona-2,4,7-trienedioate + H(+). It functions in the pathway aromatic compound metabolism; 3-phenylpropanoate degradation. Catalyzes the non-heme iron(II)-dependent oxidative cleavage of 2,3-dihydroxyphenylpropionic acid and 2,3-dihydroxicinnamic acid into 2-hydroxy-6-ketononadienedioate and 2-hydroxy-6-ketononatrienedioate, respectively. The sequence is that of 2,3-dihydroxyphenylpropionate/2,3-dihydroxicinnamic acid 1,2-dioxygenase 1 from Dechloromonas aromatica (strain RCB).